A 326-amino-acid chain; its full sequence is Probable cell division protein WhiA (326 aa).

A DNA-binding region (H-T-H motif) is located at residues serine 275–serine 308.

This sequence belongs to the WhiA family.

Involved in cell division and chromosome segregation. This Beutenbergia cavernae (strain ATCC BAA-8 / DSM 12333 / CCUG 43141 / JCM 11478 / NBRC 16432 / NCIMB 13614 / HKI 0122) protein is Probable cell division protein WhiA.